A 469-amino-acid chain; its full sequence is Uronate isomerase (469 aa).

It belongs to the metallo-dependent hydrolases superfamily. Uronate isomerase family.

It catalyses the reaction D-glucuronate = D-fructuronate. The catalysed reaction is aldehydo-D-galacturonate = keto-D-tagaturonate. It functions in the pathway carbohydrate metabolism; pentose and glucuronate interconversion. This Mesorhizobium japonicum (strain LMG 29417 / CECT 9101 / MAFF 303099) (Mesorhizobium loti (strain MAFF 303099)) protein is Uronate isomerase.